The primary structure comprises 298 residues: Phosphatidylserine decarboxylase proenzyme (298 aa).

Active-site charge relay system; for autoendoproteolytic cleavage activity residues include aspartate 113, histidine 169, and serine 256. Residue serine 256 is the Schiff-base intermediate with substrate; via pyruvic acid; for decarboxylase activity of the active site. Position 256 is a pyruvic acid (Ser); by autocatalysis (serine 256).

The protein belongs to the phosphatidylserine decarboxylase family. PSD-B subfamily. Prokaryotic type II sub-subfamily. As to quaternary structure, heterodimer of a large membrane-associated beta subunit and a small pyruvoyl-containing alpha subunit. Requires pyruvate as cofactor. Post-translationally, is synthesized initially as an inactive proenzyme. Formation of the active enzyme involves a self-maturation process in which the active site pyruvoyl group is generated from an internal serine residue via an autocatalytic post-translational modification. Two non-identical subunits are generated from the proenzyme in this reaction, and the pyruvate is formed at the N-terminus of the alpha chain, which is derived from the carboxyl end of the proenzyme. The autoendoproteolytic cleavage occurs by a canonical serine protease mechanism, in which the side chain hydroxyl group of the serine supplies its oxygen atom to form the C-terminus of the beta chain, while the remainder of the serine residue undergoes an oxidative deamination to produce ammonia and the pyruvoyl prosthetic group on the alpha chain. During this reaction, the Ser that is part of the protease active site of the proenzyme becomes the pyruvoyl prosthetic group, which constitutes an essential element of the active site of the mature decarboxylase.

The protein localises to the cell membrane. The catalysed reaction is a 1,2-diacyl-sn-glycero-3-phospho-L-serine + H(+) = a 1,2-diacyl-sn-glycero-3-phosphoethanolamine + CO2. The protein operates within phospholipid metabolism; phosphatidylethanolamine biosynthesis; phosphatidylethanolamine from CDP-diacylglycerol: step 2/2. Catalyzes the formation of phosphatidylethanolamine (PtdEtn) from phosphatidylserine (PtdSer). The protein is Phosphatidylserine decarboxylase proenzyme of Desulfitobacterium hafniense (strain DSM 10664 / DCB-2).